Here is a 685-residue protein sequence, read N- to C-terminus: Frizzled-8 (685 aa).

The first 27 residues, 1 to 27, serve as a signal peptide directing secretion; the sequence is MEWGYLLEVTSLLAALAVLQRSSGAAA. Over 28 to 272 the chain is Extracellular; it reads ASAKELACQE…NPFFSQDERA (245 aa). One can recognise an FZ domain in the interval 30-151; sequence AKELACQEIT…GNPDTLCMDY (122 aa). 5 disulfide bridges follow: cysteine 35–cysteine 96, cysteine 43–cysteine 89, cysteine 80–cysteine 118, cysteine 107–cysteine 148, and cysteine 111–cysteine 135. Residue asparagine 49 is glycosylated (N-linked (GlcNAc...) asparagine). 71-78 serves as a coordination point for hexadecanoate; that stretch reads QFWPLVEI. Positions 95-100 are wnt-binding; that stretch reads ICLEDY. A wnt-binding region spans residues 147 to 152; the sequence is LCMDYN. N-linked (GlcNAc...) asparagine glycosylation occurs at asparagine 152. The segment at 155 to 223 is disordered; that stretch reads DLTTAAPSPP…KARPPGGGAA (69 aa). Residues 161–176 show a composition bias toward pro residues; that stretch reads PSPPRRLPPPPPPGEQ. Composition is skewed to low complexity over residues 177–187 and 200–223; these read PPSGSGHSRPP and GSGD…GGAA. Residues 273–293 traverse the membrane as a helical segment; it reads FTVFWIGLWSVLCFVSTFATV. Over 294–309 the chain is Cytoplasmic; it reads STFLIDMERFKYPERP. The chain crosses the membrane as a helical span at residues 310–330; the sequence is IIFLSACYLFVSVGYLVRLVA. The Extracellular segment spans residues 331–394; sequence GHEKVACSGG…RYETTGPALC (64 aa). A helical transmembrane segment spans residues 395–415; it reads TVVFLLVYFFGMASSIWWVIL. Topologically, residues 416 to 437 are cytoplasmic; sequence SLTWFLAAGMKWGNEAIAGYSQ. The chain crosses the membrane as a helical span at residues 438–458; that stretch reads YFHLAAWLVPSVKSIAVLALS. The Extracellular segment spans residues 459-481; that stretch reads SVDGDPVAGICYVGNQSLDNLRG. Asparagine 473 carries N-linked (GlcNAc...) asparagine glycosylation. Residues 482-502 form a helical membrane-spanning segment; it reads FVLAPLVIYLFIGTMFLLAGF. Over 503–530 the chain is Cytoplasmic; it reads VSLFRIRSVIKQQGGPTKTHKLEKLMIR. The chain crosses the membrane as a helical span at residues 531 to 551; that stretch reads LGLFTVLYTVPAAVVVACLFY. Residues 552 to 582 lie on the Extracellular side of the membrane; it reads EQHNRPRWEATHNCPCLRDLQPDQARRPDYA. A helical transmembrane segment spans residues 583–603; it reads VFMLKYFMCLVVGITSGVWVW. Residues 604 to 685 are Cytoplasmic-facing; it reads SGKTLESWRA…YPKQMPLSQV (82 aa). Residues 606–611 carry the Lys-Thr-X-X-X-Trp motif, mediates interaction with the PDZ domain of Dvl family members motif; sequence KTLESW. The span at 631-655 shows a compositional bias: gly residues; the sequence is AGGSGPGGSGPGPGGGGGHGGGGGS. The disordered stretch occupies residues 631–656; sequence AGGSGPGGSGPGPGGGGGHGGGGGSL. The PDZ-binding motif lies at 683-685; it reads SQV.

It belongs to the G-protein coupled receptor Fz/Smo family. Component of a Wnt-signaling complex that contains a WNT protein, a FZD protein and LRP5 or LRP6. Interacts directly with LRP5 or LRP6; the interaction is promoted by Wnt-binding and signaling and inhibited by DKK1. Interacts (via the PDZ-binding motif) with GPOC (via its PDZ domain). Interacts with RSPO1 and RSPO3. Interacts with glypican GPC3. Post-translationally, ubiquitinated by ZNRF3, leading to its degradation by the proteasome. Expressed in chondrocytes.

The protein resides in the membrane. Its subcellular location is the golgi apparatus. It is found in the cell membrane. Functionally, receptor for Wnt proteins. Component of the Wnt-Fzd-LRP5-LRP6 complex that triggers beta-catenin signaling through inducing aggregation of receptor-ligand complexes into ribosome-sized signalosomes. The beta-catenin canonical signaling pathway leads to the activation of disheveled proteins, inhibition of GSK-3 kinase, nuclear accumulation of beta-catenin and activation of Wnt target genes. A second signaling pathway involving PKC and calcium fluxes has been seen for some family members, but it is not yet clear if it represents a distinct pathway or if it can be integrated in the canonical pathway, as PKC seems to be required for Wnt-mediated inactivation of GSK-3 kinase. Both pathways seem to involve interactions with G-proteins. May be involved in transduction and intercellular transmission of polarity information during tissue morphogenesis and/or in differentiated tissues. Coreceptor along with RYK of Wnt proteins, such as WNT1. This Mus musculus (Mouse) protein is Frizzled-8 (Fzd8).